The sequence spans 982 residues: Bifunctional glutamine synthetase adenylyltransferase/adenylyl-removing enzyme (982 aa).

An adenylyl removase region spans residues 1–460 (MSLPSLANLP…HFRQVIADPD (460 aa)). The tract at residues 473–982 (GAEWIPLWEE…IRIWRELRLG (510 aa)) is adenylyl transferase.

The protein belongs to the GlnE family. Mg(2+) serves as cofactor.

It catalyses the reaction [glutamine synthetase]-O(4)-(5'-adenylyl)-L-tyrosine + phosphate = [glutamine synthetase]-L-tyrosine + ADP. It carries out the reaction [glutamine synthetase]-L-tyrosine + ATP = [glutamine synthetase]-O(4)-(5'-adenylyl)-L-tyrosine + diphosphate. In terms of biological role, involved in the regulation of glutamine synthetase GlnA, a key enzyme in the process to assimilate ammonia. When cellular nitrogen levels are high, the C-terminal adenylyl transferase (AT) inactivates GlnA by covalent transfer of an adenylyl group from ATP to specific tyrosine residue of GlnA, thus reducing its activity. Conversely, when nitrogen levels are low, the N-terminal adenylyl removase (AR) activates GlnA by removing the adenylyl group by phosphorolysis, increasing its activity. The regulatory region of GlnE binds the signal transduction protein PII (GlnB) which indicates the nitrogen status of the cell. This is Bifunctional glutamine synthetase adenylyltransferase/adenylyl-removing enzyme from Pseudomonas aeruginosa (strain ATCC 15692 / DSM 22644 / CIP 104116 / JCM 14847 / LMG 12228 / 1C / PRS 101 / PAO1).